The chain runs to 720 residues: Serrate RNA effector molecule (720 aa).

Disordered regions lie at residues M1 to R192, L288 to D335, and E361 to G380. Over residues S33–P47 the composition is skewed to low complexity. Residues L48 to S76 show a composition bias toward basic and acidic residues. Residues S76, S90, and S92 each carry the phosphoserine modification. Basic residues predominate over residues D99–Y115. Basic and acidic residues-rich tracts occupy residues R116 to R126 and P136 to H164. A compositionally biased stretch (polar residues) spans L288 to P297. Residues E368–H378 are compositionally biased toward basic and acidic residues. The C2H2-type zinc finger occupies Y498–H523. Disordered regions lie at residues Y543–G622 and R666–L687. Residues P570–N607 are compositionally biased toward basic and acidic residues. Residues D608–G622 are compositionally biased toward gly residues. Phosphoserine is present on S689.

This sequence belongs to the ARS2 family. As to quaternary structure, interacts with HYL1. Interacts with RCF3, RS40 and RS41. In terms of tissue distribution, expressed in shoot meristems and in emerging organ primordia throughout development.

The protein resides in the nucleus. The protein localises to the nucleus speckle. In terms of biological role, acts as a mediator between the cap-binding complex (CBC) and both the pre-mRNA splicing and primary microRNAs (miRNAs) processing machinery. Required for proper processing of primary miRNAs to miRNAs, thereby playing a role in RNA-mediated gene silencing (RNAi) by miRNAs. Does not participate in sense post-transcriptional gene silencing. Acts as a regulator of meristem activity and adaxial leaf fate via the miRNA gene-silencing pathway by regulating the expression of PHB and by limiting the competence of shoot tissue to respond to KNOX expression. Its function is however not limited to miRNA-mediated repression of leaf polarity genes, but rather acts as a general regulator of primary microRNAs processing. Also critical for the accumulation of the trans-acting small interfering RNA (ta-siRNA). Required for pre-mRNA splicing. This is Serrate RNA effector molecule (SE) from Arabidopsis thaliana (Mouse-ear cress).